The primary structure comprises 288 residues: Pyruvate synthase subunit PorB (288 aa).

[4Fe-4S] cluster is bound by residues Cys16, Cys19, and Cys44. Over residues 137–148 (STPYGASTTTSP) the composition is skewed to polar residues. Residues 137-159 (STPYGASTTTSPHGKESFGEDRP) form a disordered region. Over residues 149–159 (HGKESFGEDRP) the composition is skewed to basic and acidic residues. Position 208 (Cys208) interacts with [4Fe-4S] cluster.

In terms of assembly, heterotetramer of one alpha, one beta, one delta and one gamma chain. The cofactor is [4Fe-4S] cluster.

The enzyme catalyses 2 oxidized [2Fe-2S]-[ferredoxin] + pyruvate + CoA = 2 reduced [2Fe-2S]-[ferredoxin] + acetyl-CoA + CO2 + H(+). In Methanothermobacter marburgensis (strain ATCC BAA-927 / DSM 2133 / JCM 14651 / NBRC 100331 / OCM 82 / Marburg) (Methanobacterium thermoautotrophicum), this protein is Pyruvate synthase subunit PorB (porB).